A 605-amino-acid polypeptide reads, in one-letter code: Aspartate--tRNA(Asp/Asn) ligase (605 aa).

Glu172 is an L-aspartate binding site. The interval 196–199 (QLFK) is aspartate. Residue Arg218 participates in L-aspartate binding. ATP-binding positions include 218 to 220 (RDE) and Gln227. His455 lines the L-aspartate pocket. Glu489 is a binding site for ATP. Residue Arg496 coordinates L-aspartate. Residue 541 to 544 (GLDR) coordinates ATP.

The protein belongs to the class-II aminoacyl-tRNA synthetase family. Type 1 subfamily. As to quaternary structure, homodimer.

The protein resides in the cytoplasm. The catalysed reaction is tRNA(Asx) + L-aspartate + ATP = L-aspartyl-tRNA(Asx) + AMP + diphosphate. In terms of biological role, aspartyl-tRNA synthetase with relaxed tRNA specificity since it is able to aspartylate not only its cognate tRNA(Asp) but also tRNA(Asn). Reaction proceeds in two steps: L-aspartate is first activated by ATP to form Asp-AMP and then transferred to the acceptor end of tRNA(Asp/Asn). The chain is Aspartate--tRNA(Asp/Asn) ligase from Ralstonia nicotianae (strain ATCC BAA-1114 / GMI1000) (Ralstonia solanacearum).